Reading from the N-terminus, the 143-residue chain is Peptide methionine sulfoxide reductase MsrB (143 aa).

The MsrB domain occupies 16 to 139 (DAELRRRLTP…NSAALNFEAK (124 aa)). Residues cysteine 55, cysteine 58, cysteine 104, and cysteine 107 each contribute to the Zn(2+) site. Catalysis depends on cysteine 128, which acts as the Nucleophile.

The protein belongs to the MsrB Met sulfoxide reductase family. It depends on Zn(2+) as a cofactor.

The enzyme catalyses L-methionyl-[protein] + [thioredoxin]-disulfide + H2O = L-methionyl-(R)-S-oxide-[protein] + [thioredoxin]-dithiol. This chain is Peptide methionine sulfoxide reductase MsrB, found in Burkholderia pseudomallei (strain 1710b).